A 600-amino-acid polypeptide reads, in one-letter code: Leiomodin-1 (600 aa).

Phosphoserine is present on Ser-12. Disordered regions lie at residues 38–61 (VVDP…QSTG), 80–324 (MQRE…PLER), and 472–573 (DKQR…QEKN). Composition is skewed to basic and acidic residues over residues 80-127 (MQRE…EPKR), 134-240 (FSRD…EKMK), 247-256 (DMKKEDEKVK), 263-292 (DTKK…KTPE), and 472-497 (DKQR…DLLE). Ser-85 and Ser-135 each carry phosphoserine. 8 tandem repeats follow at residues 165–180 (AAVD…RGEE), 181–196 (RAVA…GSDR), 197–212 (NTGL…EEMK), 213–228 (EVAK…GERR), 229–244 (NTDT…RAGG), 245–260 (NTDM…RGTG), 261–276 (NTDT…KNEP), and 277–293 (LHEK…TPEK). The interval 165-293 (AAVDKKEAGK…DDSKTKTPEK (129 aa)) is 8 X approximate tandem repeats. Positions 508–527 (SPKPSPQPSPKPSPKNSPKK) are 5 X 4 AA approximate tandem repeats. Composition is skewed to pro residues over residues 510–522 (KPSP…PSPK) and 532–543 (AAPPPPPPPLAP). Ser-555 bears the Phosphoserine mark. A WH2 domain is found at 574 to 593 (SRDQLLAAIRSSNLKQLKKV).

It belongs to the tropomodulin family. Detected in lung vascular smooth muscle (at protein level). Detected in thyroid and extraocular smooth muscle, but not skeletal muscle. Detected in heart, aorta, skeletal muscle, colon, urinary bladder, uterus, stomach, and small intestine.

The protein resides in the cytoplasm. It localises to the myofibril. Its subcellular location is the sarcomere. The protein localises to the cytoskeleton. Required for proper contractility of visceral smooth muscle cells. Mediates nucleation of actin filaments. In Homo sapiens (Human), this protein is Leiomodin-1 (LMOD1).